The sequence spans 385 residues: Alkanesulfonate monooxygenase (385 aa).

Belongs to the SsuD family.

The catalysed reaction is an alkanesulfonate + FMNH2 + O2 = an aldehyde + FMN + sulfite + H2O + 2 H(+). In terms of biological role, catalyzes the desulfonation of aliphatic sulfonates. The protein is Alkanesulfonate monooxygenase of Paraburkholderia phymatum (strain DSM 17167 / CIP 108236 / LMG 21445 / STM815) (Burkholderia phymatum).